The sequence spans 284 residues: L-ribulose-5-phosphate 3-epimerase UlaE (284 aa).

This sequence belongs to the L-ribulose-5-phosphate 3-epimerase family.

It catalyses the reaction L-ribulose 5-phosphate = L-xylulose 5-phosphate. It participates in cofactor degradation; L-ascorbate degradation; D-xylulose 5-phosphate from L-ascorbate: step 3/4. Catalyzes the isomerization of L-xylulose-5-phosphate to L-ribulose-5-phosphate. Is involved in the anaerobic L-ascorbate utilization. The chain is L-ribulose-5-phosphate 3-epimerase UlaE from Salmonella typhi.